A 588-amino-acid chain; its full sequence is Transcription factor 7-like 1 (588 aa).

The segment covering 1–31 (MPQLGGGGGGGGGGSGGGGGSSAGAAGGGDD) has biased composition (gly residues). The interval 1–74 (MPQLGGGGGG…VKSSLVNESE (74 aa)) is CTNNB1-binding. Disordered stretches follow at residues 1 to 101 (MPQL…PRDY), 203 to 234 (SPGS…SPYY), and 409 to 506 (LYPT…LSLT). Positions 67–81 (SSLVNESENQSSSSD) are enriched in low complexity. Residues 83–101 (EAERRPQPVRDTFQKPRDY) are compositionally biased toward basic and acidic residues. The HMG box DNA-binding region spans 346-414 (VKKPLNAFML…LHSQLYPTWS (69 aa)). A Nuclear localization signal motif is present at residues 421 to 427 (KKKKRKR). Composition is skewed to low complexity over residues 431–441 (LSQTQSQQQVQ) and 478–497 (SPAT…ATHS).

This sequence belongs to the TCF/LEF family. As to quaternary structure, binds the armadillo repeat of CTNNB1 and forms a stable complex. Interacts with DAZAP2. In terms of tissue distribution, detected in hair follicles and skin keratinocytes, and at lower levels in stomach epithelium.

It localises to the nucleus. In terms of biological role, participates in the Wnt signaling pathway. Binds to DNA and acts as a repressor in the absence of CTNNB1, and as an activator in its presence. Necessary for the terminal differentiation of epidermal cells, the formation of keratohyalin granules and the development of the barrier function of the epidermis. Down-regulates NQO1, leading to increased mitomycin c resistance. This is Transcription factor 7-like 1 (TCF7L1) from Homo sapiens (Human).